A 413-amino-acid polypeptide reads, in one-letter code: Tyrosine--tRNA ligase (413 aa).

The short motif at 59–68 (PTAPDIHLGH) is the 'HIGH' region element. The short motif at 243–247 (KMSKS) is the 'KMSKS' region element. Lysine 246 provides a ligand contact to ATP. In terms of domain architecture, S4 RNA-binding spans 351–411 (LAIGQLLKQA…GKRRFARVTL (61 aa)).

The protein belongs to the class-I aminoacyl-tRNA synthetase family. TyrS type 2 subfamily. Homodimer.

It localises to the cytoplasm. The catalysed reaction is tRNA(Tyr) + L-tyrosine + ATP = L-tyrosyl-tRNA(Tyr) + AMP + diphosphate + H(+). In terms of biological role, catalyzes the attachment of tyrosine to tRNA(Tyr) in a two-step reaction: tyrosine is first activated by ATP to form Tyr-AMP and then transferred to the acceptor end of tRNA(Tyr). In Burkholderia pseudomallei (strain K96243), this protein is Tyrosine--tRNA ligase.